Consider the following 546-residue polypeptide: Chaperonin GroEL (546 aa).

ATP contacts are provided by residues 29-32 (TLGP), 86-90 (DGTTT), Gly-413, 476-478 (NAA), and Asp-492. A disordered region spans residues 521–546 (RPDESGNDAGAGAQGMDPSMMGGGMM).

Belongs to the chaperonin (HSP60) family. In terms of assembly, forms a cylinder of 14 subunits composed of two heptameric rings stacked back-to-back. Interacts with the co-chaperonin GroES.

It localises to the cytoplasm. It carries out the reaction ATP + H2O + a folded polypeptide = ADP + phosphate + an unfolded polypeptide.. Its function is as follows. Together with its co-chaperonin GroES, plays an essential role in assisting protein folding. The GroEL-GroES system forms a nano-cage that allows encapsulation of the non-native substrate proteins and provides a physical environment optimized to promote and accelerate protein folding. The polypeptide is Chaperonin GroEL (Tetragenococcus halophilus (Pediococcus halophilus)).